A 585-amino-acid chain; its full sequence is Poly(A) RNA polymerase, mitochondrial (585 aa).

Residues 1–37 constitute a mitochondrion transit peptide; that stretch reads MAARGVGLLTRLPVCSQRRNRIPRSISRLLSCPGTIA. At lysine 90 the chain carries N6-acetyllysine. Residues 107-109 and 244-245 each bind ATP; these read YES and GC. 2 residues coordinate Mg(2+): aspartate 246 and aspartate 248. In terms of domain architecture, PAP-associated spans 441–486; the sequence is ELLIKEFFEYFGNFAFNKNSINIRQGREQNKPDSSPLYIQNPFETS. Positions 537-585 are disordered; the sequence is PGSGHTSLSRKKKKKPMSEKVKGLLASIKSNSPDSSTDTSGKRTISTQA. Residues 564–585 show a composition bias toward polar residues; that stretch reads IKSNSPDSSTDTSGKRTISTQA.

It belongs to the DNA polymerase type-B-like family. Homodimer. It depends on Mg(2+) as a cofactor. The cofactor is Mn(2+).

Its subcellular location is the cytoplasm. The protein resides in the mitochondrion. The enzyme catalyses RNA(n) + ATP = RNA(n)-3'-adenine ribonucleotide + diphosphate. Polymerase that creates the 3' poly(A) tail of mitochondrial transcripts. Can use all four nucleotides, but has higher activity with ATP and UTP (in vitro). Plays a role in replication-dependent histone mRNA degradation. May be involved in the terminal uridylation of mature histone mRNAs before their degradation is initiated. Might be responsible for the creation of some UAA stop codons which are not encoded in mtDNA. The polypeptide is Poly(A) RNA polymerase, mitochondrial (Mtpap) (Mus musculus (Mouse)).